Consider the following 151-residue polypeptide: MRTMGLDLGTKTIGVAVSDGLGLTAQGITTVRRTSLKADLAALATVASEHEVTHVVLGLPLNMDGSEGPRAEASRKFADTLAQSLGVTVELWDERLSTVAATRTLLEADVSRARRREVIDQVAAQFILQGWLDAHRPPDTDYHPDDYDSEP.

This sequence belongs to the YqgF nuclease family.

It is found in the cytoplasm. In terms of biological role, could be a nuclease involved in processing of the 5'-end of pre-16S rRNA. The polypeptide is Putative pre-16S rRNA nuclease (Myxococcus xanthus (strain DK1622)).